The primary structure comprises 137 residues: MLQPKRTKYRKQFKGRIKGVAKGGSDLAFGEFGLKAQEPNRVNAREIEAARRAITRYMKRAGRVWIRVFPDVPVTKKPTEVRMGKGKGSVEYWACKVKPGRMMFEIDGVSEEIAREALRLGSAKLSVKTRFVQRIAE.

This sequence belongs to the universal ribosomal protein uL16 family. In terms of assembly, part of the 50S ribosomal subunit.

Its function is as follows. Binds 23S rRNA and is also seen to make contacts with the A and possibly P site tRNAs. This is Large ribosomal subunit protein uL16 from Rhizobium johnstonii (strain DSM 114642 / LMG 32736 / 3841) (Rhizobium leguminosarum bv. viciae).